Here is a 265-residue protein sequence, read N- to C-terminus: Capsule polysaccharide export inner-membrane protein BexB (265 aa).

Helical transmembrane passes span 37 to 57 (IGFF…VMMW), 64 to 84 (KFST…AMMW), 118 to 138 (LLEV…LVMI), 151 to 171 (LIAW…ICAI), 178 to 198 (FGKI…AFFF), and 235 to 255 (ESIG…LVMV). The 222-residue stretch at 37–258 (IGFFWLFVEP…LLGLVMVKNF (222 aa)) folds into the ABC transmembrane type-2 domain.

This sequence belongs to the ABC-2 integral membrane protein family.

The protein resides in the cell inner membrane. Its function is as follows. May form an ATP-driven capsule polysaccharide export apparatus, in association with the BexA, BexC and BexD proteins. This chain is Capsule polysaccharide export inner-membrane protein BexB (bexB), found in Haemophilus influenzae.